Here is a 508-residue protein sequence, read N- to C-terminus: Steroid 17-alpha-hydroxylase/17,20 lyase (508 aa).

Residue Cys-442 coordinates heme.

It belongs to the cytochrome P450 family. It depends on heme as a cofactor.

It is found in the endoplasmic reticulum membrane. Its subcellular location is the microsome membrane. The enzyme catalyses a C21-steroid + reduced [NADPH--hemoprotein reductase] + O2 = a 17alpha-hydroxy-C21-steroid + oxidized [NADPH--hemoprotein reductase] + H2O + H(+). The catalysed reaction is progesterone + reduced [NADPH--hemoprotein reductase] + O2 = 17alpha-hydroxyprogesterone + oxidized [NADPH--hemoprotein reductase] + H2O + H(+). It carries out the reaction pregnenolone + reduced [NADPH--hemoprotein reductase] + O2 = 17alpha-hydroxypregnenolone + oxidized [NADPH--hemoprotein reductase] + H2O + H(+). It catalyses the reaction 17alpha-hydroxyprogesterone + reduced [NADPH--hemoprotein reductase] + O2 = androst-4-ene-3,17-dione + acetate + oxidized [NADPH--hemoprotein reductase] + H2O + 2 H(+). The enzyme catalyses 17alpha-hydroxyprogesterone + reduced [NADPH--hemoprotein reductase] + O2 = 16alpha,17alpha-dihydroxyprogesterone + oxidized [NADPH--hemoprotein reductase] + H2O + H(+). The catalysed reaction is 16alpha,17alpha-dihydroxyprogesterone + reduced [NADPH--hemoprotein reductase] + O2 = 6beta,16alpha,17alpha-trihydroxyprogesterone + oxidized [NADPH--hemoprotein reductase] + H2O + H(+). It carries out the reaction 17alpha-hydroxypregnenolone + reduced [NADPH--hemoprotein reductase] + O2 = 3beta-hydroxyandrost-5-en-17-one + acetate + oxidized [NADPH--hemoprotein reductase] + H2O + 2 H(+). It catalyses the reaction 16alpha,17alpha-dihydroxypregnenolone + reduced [NADPH--hemoprotein reductase] + O2 = 3beta,16alpha-dihydroxy-androst-5-en-17-one + acetate + oxidized [NADPH--hemoprotein reductase] + H2O + 2 H(+). The enzyme catalyses 3beta-hydroxyandrost-5-en-17-one + reduced [NADPH--hemoprotein reductase] + O2 = 3beta,16alpha-dihydroxy-androst-5-en-17-one + oxidized [NADPH--hemoprotein reductase] + H2O + H(+). The catalysed reaction is androst-4-ene-3,17-dione + reduced [NADPH--hemoprotein reductase] + O2 = 16alpha-hydroxyandrost-4-ene-3,17-dione + oxidized [NADPH--hemoprotein reductase] + H2O + H(+). It functions in the pathway steroid hormone biosynthesis. It participates in steroid biosynthesis; glucocorticoid biosynthesis. With respect to regulation, regulated predominantly by intracellular cAMP levels. The 17,20-lyase activity is stimulated by cytochrome b5, which acts as an allosteric effector increasing the Vmax of the lyase activity. Its function is as follows. A cytochrome P450 monooxygenase involved in corticoid and androgen biosynthesis. Catalyzes 17-alpha hydroxylation of C21 steroids, which is common for both pathways. A second oxidative step, required only for androgen synthesis, involves an acyl-carbon cleavage. The 17-alpha hydroxy intermediates, as part of adrenal glucocorticoids biosynthesis pathway, are precursors of cortisol. Hydroxylates steroid hormones, pregnenolone and progesterone to form 17-alpha hydroxy metabolites, followed by the cleavage of the C17-C20 bond to form C19 steroids, dehydroepiandrosterone (DHEA) and androstenedione. Has 16-alpha hydroxylase activity. Catalyzes 16-alpha hydroxylation of 17-alpha hydroxy pregnenolone, followed by the cleavage of the C17-C20 bond to form 16-alpha-hydroxy DHEA. Also 16-alpha hydroxylates androgens, relevant for estriol synthesis. Mechanistically, uses molecular oxygen inserting one oxygen atom into a substrate, and reducing the second into a water molecule, with two electrons provided by NADPH via cytochrome P450 reductase (CPR; NADPH-ferrihemoprotein reductase). In Equus caballus (Horse), this protein is Steroid 17-alpha-hydroxylase/17,20 lyase (CYP17A1).